Consider the following 147-residue polypeptide: D-aminoacyl-tRNA deacylase (147 aa).

The Gly-cisPro motif, important for rejection of L-amino acids signature appears at 136–137 (GP).

This sequence belongs to the DTD family. Homodimer.

Its subcellular location is the cytoplasm. It carries out the reaction glycyl-tRNA(Ala) + H2O = tRNA(Ala) + glycine + H(+). It catalyses the reaction a D-aminoacyl-tRNA + H2O = a tRNA + a D-alpha-amino acid + H(+). Functionally, an aminoacyl-tRNA editing enzyme that deacylates mischarged D-aminoacyl-tRNAs. Also deacylates mischarged glycyl-tRNA(Ala), protecting cells against glycine mischarging by AlaRS. Acts via tRNA-based rather than protein-based catalysis; rejects L-amino acids rather than detecting D-amino acids in the active site. By recycling D-aminoacyl-tRNA to D-amino acids and free tRNA molecules, this enzyme counteracts the toxicity associated with the formation of D-aminoacyl-tRNA entities in vivo and helps enforce protein L-homochirality. The sequence is that of D-aminoacyl-tRNA deacylase from Streptococcus equi subsp. zooepidemicus (strain H70).